The sequence spans 472 residues: MAGGVTGGAAGTWSDRFEQGLHPFIEAFNASIGFDLTLLQEDLDGSIAHARMLASVGVITEAEAEQLVEGLETVRAEAASGSFQPGLADEDVHFAVERRLIALLGPVGKKLHTGRSRNDQVGTDLRLWLRRRLDGLDQDLQRLQGALLTQADRHRRTMIPGYTHLQRAQPLCLAHHLLAYVEMLERDRERLQDARKRVNICPLGAAALAGTPVPIDRQRTAKELGFSAVYANSLDAVSDRDFCVEFSAAASLVMVHLSRLAEEVIAWASEEFGFVRLSDRCATGSSLMPQKKNPDVPELVRGKTGRVFGHLQGLLTMIKGLPLAYNKDFQEDKEALFDAFRTTRDCVEAMAILFEEGLDFRVERLNEAVEQDFSNATDVADYLVSRGVPFREAYQLVGAVVRRCLEQGCLLRDLDLSAWKELHPAFEADLHDALAPRAVVAARRSEGGTGFERVDEQLQRWLQRFNGTQPVG.

It belongs to the lyase 1 family. Argininosuccinate lyase subfamily.

It is found in the cytoplasm. The catalysed reaction is 2-(N(omega)-L-arginino)succinate = fumarate + L-arginine. It participates in amino-acid biosynthesis; L-arginine biosynthesis; L-arginine from L-ornithine and carbamoyl phosphate: step 3/3. The chain is Argininosuccinate lyase from Synechococcus sp. (strain CC9605).